The sequence spans 291 residues: N-acetylmannosamine kinase (291 aa).

Residues 5–12 and 132–139 each bind ATP; these read AIDIGGTK and GVGGGVVS. Zn(2+) is bound by residues His156, Cys166, Cys168, and Cys173.

This sequence belongs to the ROK (NagC/XylR) family. NanK subfamily. Homodimer.

It catalyses the reaction an N-acyl-D-mannosamine + ATP = an N-acyl-D-mannosamine 6-phosphate + ADP + H(+). It functions in the pathway amino-sugar metabolism; N-acetylneuraminate degradation; D-fructose 6-phosphate from N-acetylneuraminate: step 2/5. Its function is as follows. Catalyzes the phosphorylation of N-acetylmannosamine (ManNAc) to ManNAc-6-P. This chain is N-acetylmannosamine kinase, found in Escherichia coli O1:K1 / APEC.